The chain runs to 295 residues: UDP-N-acetylenolpyruvoylglucosamine reductase (295 aa).

One can recognise an FAD-binding PCMH-type domain in the interval 23 to 188 (KVGGPADFLA…ISAKFALKPG (166 aa)). The active site involves Arg-167. Ser-217 functions as the Proton donor in the catalytic mechanism. Glu-287 is a catalytic residue.

Belongs to the MurB family. Requires FAD as cofactor.

The protein localises to the cytoplasm. The catalysed reaction is UDP-N-acetyl-alpha-D-muramate + NADP(+) = UDP-N-acetyl-3-O-(1-carboxyvinyl)-alpha-D-glucosamine + NADPH + H(+). It participates in cell wall biogenesis; peptidoglycan biosynthesis. In terms of biological role, cell wall formation. The protein is UDP-N-acetylenolpyruvoylglucosamine reductase of Streptococcus pyogenes serotype M18 (strain MGAS8232).